Reading from the N-terminus, the 280-residue chain is Succinate dehydrogenase [ubiquinone] iron-sulfur subunit, mitochondrial (280 aa).

Residues 1 to 28 (MAAVVALSLRRRFPAAALGGARLQACRG) constitute a mitochondrion transit peptide. In terms of domain architecture, 2Fe-2S ferredoxin-type spans 40-133 (KKFAIYRWDP…VSKIYPLPHM (94 aa)). Residues lysine 51 and lysine 55 each carry the N6-acetyllysine modification. Residues cysteine 93, cysteine 98, cysteine 101, and cysteine 113 each coordinate [2Fe-2S] cluster. Residues 146-218 (FYAQYKSIEP…PAVLMQAYRW (73 aa)) form an interaction with SDHAF1 region. Residues 176–206 (DREKLDGLYECILCACCSTSCPSYWWNGDKY) enclose the 4Fe-4S ferredoxin-type domain. [4Fe-4S] cluster-binding residues include cysteine 186, cysteine 189, and cysteine 192. A [3Fe-4S] cluster-binding site is contributed by cysteine 196. Tryptophan 201 serves as a coordination point for a ubiquinone. Positions 243 and 249 each coordinate [3Fe-4S] cluster. [4Fe-4S] cluster is bound at residue cysteine 253.

The protein belongs to the succinate dehydrogenase/fumarate reductase iron-sulfur protein family. In terms of assembly, component of complex II composed of four subunits: the flavoprotein (FP) SDHA, iron-sulfur protein (IP) SDHB, and a cytochrome b560 composed of SDHC and SDHD. Interacts with SDHAF1; the interaction is required for iron-sulfur cluster incorporation into SDHB. The cofactor is [2Fe-2S] cluster. Requires [3Fe-4S] cluster as cofactor. [4Fe-4S] cluster serves as cofactor.

It localises to the mitochondrion inner membrane. The enzyme catalyses a quinone + succinate = fumarate + a quinol. It carries out the reaction (R)-malate + a quinone = enol-oxaloacetate + a quinol. The catalysed reaction is (S)-malate + a quinone = enol-oxaloacetate + a quinol. It functions in the pathway carbohydrate metabolism; tricarboxylic acid cycle; fumarate from succinate (eukaryal route): step 1/1. Enol-oxaloacetate inhibits the succinate dehydrogenase activity. Functionally, iron-sulfur protein (IP) subunit of the succinate dehydrogenase complex (mitochondrial respiratory chain complex II), responsible for transferring electrons from succinate to ubiquinone (coenzyme Q). SDH also oxidizes malate to the non-canonical enol form of oxaloacetate, enol-oxaloacetate. Enol-oxaloacetate, which is a potent inhibitor of the succinate dehydrogenase activity, is further isomerized into keto-oxaloacetate. This is Succinate dehydrogenase [ubiquinone] iron-sulfur subunit, mitochondrial (SDHB) from Bos taurus (Bovine).